The sequence spans 133 residues: Putative pre-16S rRNA nuclease (133 aa).

It belongs to the YqgF nuclease family.

The protein resides in the cytoplasm. In terms of biological role, could be a nuclease involved in processing of the 5'-end of pre-16S rRNA. The sequence is that of Putative pre-16S rRNA nuclease from Bordetella pertussis (strain Tohama I / ATCC BAA-589 / NCTC 13251).